We begin with the raw amino-acid sequence, 552 residues long: Arginine--tRNA ligase (552 aa).

A 'HIGH' region motif is present at residues alanine 130–glycine 140.

The protein belongs to the class-I aminoacyl-tRNA synthetase family. As to quaternary structure, monomer.

It is found in the cytoplasm. The enzyme catalyses tRNA(Arg) + L-arginine + ATP = L-arginyl-tRNA(Arg) + AMP + diphosphate. The chain is Arginine--tRNA ligase from Nocardia farcinica (strain IFM 10152).